The following is a 279-amino-acid chain: Pantothenate synthetase (279 aa).

ATP is bound at residue 26–33 (MGNLHDGH). H33 acts as the Proton donor in catalysis. Q57 is a binding site for (R)-pantoate. Position 57 (Q57) interacts with beta-alanine. Position 144–147 (144–147 (GKKD)) interacts with ATP. Q150 lines the (R)-pantoate pocket. Residue 181–184 (LSSR) participates in ATP binding.

This sequence belongs to the pantothenate synthetase family. In terms of assembly, homodimer.

It is found in the cytoplasm. The catalysed reaction is (R)-pantoate + beta-alanine + ATP = (R)-pantothenate + AMP + diphosphate + H(+). Its pathway is cofactor biosynthesis; (R)-pantothenate biosynthesis; (R)-pantothenate from (R)-pantoate and beta-alanine: step 1/1. Its function is as follows. Catalyzes the condensation of pantoate with beta-alanine in an ATP-dependent reaction via a pantoyl-adenylate intermediate. The polypeptide is Pantothenate synthetase (Herminiimonas arsenicoxydans).